Reading from the N-terminus, the 248-residue chain is Adenosylcobinamide-GDP ribazoletransferase (248 aa).

7 consecutive transmembrane segments (helical) span residues 24–44 (EINL…IGAW), 70–90 (VIIT…GLFS), 106–126 (VGAN…ALFL), 134–154 (ICWL…LLFA), 168–188 (IFLG…LAVL), 189–209 (GLFF…FTII), and 228–248 (AGGQ…WGLV).

The protein belongs to the CobS family. Requires Mg(2+) as cofactor.

It is found in the cell membrane. The enzyme catalyses alpha-ribazole + adenosylcob(III)inamide-GDP = adenosylcob(III)alamin + GMP + H(+). It catalyses the reaction alpha-ribazole 5'-phosphate + adenosylcob(III)inamide-GDP = adenosylcob(III)alamin 5'-phosphate + GMP + H(+). It functions in the pathway cofactor biosynthesis; adenosylcobalamin biosynthesis; adenosylcobalamin from cob(II)yrinate a,c-diamide: step 7/7. Joins adenosylcobinamide-GDP and alpha-ribazole to generate adenosylcobalamin (Ado-cobalamin). Also synthesizes adenosylcobalamin 5'-phosphate from adenosylcobinamide-GDP and alpha-ribazole 5'-phosphate. The chain is Adenosylcobinamide-GDP ribazoletransferase from Listeria monocytogenes serovar 1/2a (strain ATCC BAA-679 / EGD-e).